A 262-amino-acid polypeptide reads, in one-letter code: Alpha/beta-gliadin A-I (262 aa).

Positions 1 to 20 (MKTFLILALLAIVATTATTA) are cleaved as a signal peptide. Disordered regions lie at residues 51–73 (LGQQ…PSQQ), 87–120 (PYSQ…QQQQ), and 225–251 (YPLG…QQLP). 2 stretches are compositionally biased toward pro residues: residues 56–71 (PFPP…PFPS) and 93–104 (PFRPQQPYPQPQ). The segment covering 105 to 120 (PQYSQPQQPISQQQQQ) has biased composition (low complexity). Over residues 232–251 (FRPSQQNPQAQGSVQPQQLP) the composition is skewed to polar residues.

This sequence belongs to the gliadin/glutenin family. Post-translationally, substrate of transglutaminase.

Its function is as follows. Gliadin is the major seed storage protein in wheat. In Triticum aestivum (Wheat), this protein is Alpha/beta-gliadin A-I.